The sequence spans 382 residues: Neuropeptide Y receptor type 2 (382 aa).

The interval 1–39 is disordered; sequence MGPIGAEADENQTVEEMKMEPSGPGHTTPRGELAPDSEP. Residues 1–46 are Extracellular-facing; it reads MGPIGAEADENQTVEEMKMEPSGPGHTTPRGELAPDSEPELKDSTK. Asn-11 carries an N-linked (GlcNAc...) asparagine glycan. A helical membrane pass occupies residues 47 to 67; it reads LIEVQIILILAYCSIILLGVV. Residues 68–87 are Cytoplasmic-facing; the sequence is GNSLVIHVVIKFKSMRTVTN. Residues 88–108 traverse the membrane as a helical segment; the sequence is FFIANLAVADLLVNTLCLPFT. Topologically, residues 109 to 125 are extracellular; the sequence is LTYTLMGEWKMGPVLCH. Cys-124 and Cys-204 are disulfide-bonded. The chain crosses the membrane as a helical span at residues 126-146; it reads LVPYAQGLAVQVSTITLTVIA. The Cytoplasmic segment spans residues 147-166; it reads LDRHRCIVYHLESKISKRIS. The helical transmembrane segment at 167–187 threads the bilayer; the sequence is FLIIGLAWGISALLASPLAIF. Over 188–217 the chain is Extracellular; sequence REYSLIEIIPDFEIVACTEKWPGEEKSIYG. Residues 218 to 238 traverse the membrane as a helical segment; sequence TVYSLSSLLILYVLPLGIISF. The Cytoplasmic segment spans residues 239 to 269; sequence SYARIWSKLKNHVSPGGVNDHYHQRRQKTTK. Residues 270 to 290 form a helical membrane-spanning segment; sequence MLVCVVVVFAVSWLPLHAFQL. Over 291-305 the chain is Extracellular; that stretch reads AVDIDSQVLDLKEYK. The chain crosses the membrane as a helical span at residues 306–326; sequence LIFTVFHIIAMCSTFANPLLY. At 327-382 the chain is on the cytoplasmic side; the sequence is GWMNSNYRKAFLSAFRCEQRLDAIHSEVSMTSKAKKNLEATKNGGPDDSFTEATNV. Cys-343 carries S-palmitoyl cysteine lipidation. Residues 363–382 form a disordered region; it reads NLEATKNGGPDDSFTEATNV.

The protein belongs to the G-protein coupled receptor 1 family.

The protein resides in the cell membrane. In terms of biological role, receptor for neuropeptide Y and peptide YY. The sequence is that of Neuropeptide Y receptor type 2 (NPY2R) from Sus scrofa (Pig).